A 72-amino-acid polypeptide reads, in one-letter code: Translation initiation factor IF-1 (72 aa).

The region spanning 1–72 (MAKEEAITVD…SKGRITYRKK (72 aa)) is the S1-like domain.

It belongs to the IF-1 family. In terms of assembly, component of the 30S ribosomal translation pre-initiation complex which assembles on the 30S ribosome in the order IF-2 and IF-3, IF-1 and N-formylmethionyl-tRNA(fMet); mRNA recruitment can occur at any time during PIC assembly.

It localises to the cytoplasm. One of the essential components for the initiation of protein synthesis. Stabilizes the binding of IF-2 and IF-3 on the 30S subunit to which N-formylmethionyl-tRNA(fMet) subsequently binds. Helps modulate mRNA selection, yielding the 30S pre-initiation complex (PIC). Upon addition of the 50S ribosomal subunit IF-1, IF-2 and IF-3 are released leaving the mature 70S translation initiation complex. The polypeptide is Translation initiation factor IF-1 (Leptospira borgpetersenii serovar Hardjo-bovis (strain L550)).